Consider the following 457-residue polypeptide: Hepatocyte nuclear factor 3-beta (457 aa).

Residues 14-93 (DWSSYYAEPE…AGAMAGMGGS (80 aa)) form a transactivation domain 1 region. Positions 106–113 (LSPSLSPL) match the Nuclear localization signal motif. Thr156 carries the phosphothreonine modification. Positions 159 to 252 (KPPYSYISLI…FENGCYLRRQ (94 aa)) form a DNA-binding region, fork-head. Residues Ser212 and Ser283 each carry the phosphoserine modification. Over residues 280–292 (AQASQAQLGEAAG) the composition is skewed to low complexity. The tract at residues 280 to 365 (AQASQAQLGE…PGLPPEAHLK (86 aa)) is disordered. Residues 298–310 (PAGTESPHSSASP) are compositionally biased toward polar residues. Thr301 bears the Phosphothreonine mark. Ser303, Ser306, Ser307, and Ser309 each carry phosphoserine. A compositionally biased stretch (low complexity) spans 339–352 (PGQQQQAAAHLLGP). The interval 361-457 (EAHLKPEHHY…VYSRPIMNSS (97 aa)) is transactivation domain 2. A phosphoserine mark is found at Ser436 and Ser457.

In terms of assembly, binds DNA as a monomer. Binds TLE1. Interacts with FOXA1 and FOXA3. Interacts with PRKDC. Interacts with AKT1. Interacts with TET1; this interaction may recruit TET1 to specific genomic loci to mediate their demethylation. In terms of processing, phosphorylation on Thr-156 abolishes binding to target promoters and subsequent transcription activation upon insulin stimulation.

It is found in the nucleus. It localises to the cytoplasm. Its function is as follows. Transcription factor that is involved in embryonic development, establishment of tissue-specific gene expression and regulation of gene expression in differentiated tissues. Is thought to act as a 'pioneer' factor opening the compacted chromatin for other proteins through interactions with nucleosomal core histones and thereby replacing linker histones at target enhancer and/or promoter sites. Binds DNA with the consensus sequence 5'-[AC]A[AT]T[AG]TT[GT][AG][CT]T[CT]-3'. In embryonic development is required for notochord formation. Involved in the development of multiple endoderm-derived organ systems such as the liver, pancreas and lungs; FOXA1 and FOXA2 seem to have at least in part redundant roles. Originally described as a transcription activator for a number of liver genes such as AFP, albumin, tyrosine aminotransferase, PEPCK, etc. Interacts with the cis-acting regulatory regions of these genes. Involved in glucose homeostasis; regulates the expression of genes important for glucose sensing in pancreatic beta-cells and glucose homeostasis. Involved in regulation of fat metabolism. Binds to fibrinogen beta promoter and is involved in IL6-induced fibrinogen beta transcriptional activation. The sequence is that of Hepatocyte nuclear factor 3-beta (FOXA2) from Homo sapiens (Human).